The chain runs to 182 residues: Isopentenyl-diphosphate Delta-isomerase (182 aa).

Mn(2+) is bound by residues His-25 and His-32. The Nudix hydrolase domain occupies 30-164 (RLHLAFSSWL…PWAFSPWMVM (135 aa)). Cys-67 is a catalytic residue. Residue His-69 participates in Mn(2+) binding. Residue Glu-87 participates in Mg(2+) binding. Mn(2+)-binding residues include Glu-114 and Glu-116. Residue Glu-116 is part of the active site.

Belongs to the IPP isomerase type 1 family. Homodimer. Requires Mg(2+) as cofactor. Mn(2+) is required as a cofactor.

Its subcellular location is the cytoplasm. The enzyme catalyses isopentenyl diphosphate = dimethylallyl diphosphate. Its pathway is isoprenoid biosynthesis; dimethylallyl diphosphate biosynthesis; dimethylallyl diphosphate from isopentenyl diphosphate: step 1/1. Functionally, catalyzes the 1,3-allylic rearrangement of the homoallylic substrate isopentenyl (IPP) to its highly electrophilic allylic isomer, dimethylallyl diphosphate (DMAPP). The polypeptide is Isopentenyl-diphosphate Delta-isomerase (Escherichia coli O139:H28 (strain E24377A / ETEC)).